The primary structure comprises 617 residues: Translation initiation factor IF-2 (617 aa).

The segment covering 1-11 has biased composition (basic residues); sequence MSKHKPRHFQK. The disordered stretch occupies residues 1–25; the sequence is MSKHKPRHFQKNKFDNRAKTSAKQQ. A tr-type G domain is found at 119–288; the sequence is PRPPIVTIMG…ILLVAEVEDY (170 aa). A G1 region spans residues 128 to 135; sequence GHVDHGKT. Position 128-135 (128-135) interacts with GTP; the sequence is GHVDHGKT. The segment at 153 to 157 is G2; sequence GITQK. Residues 175–178 form a G3 region; it reads DTPG. GTP contacts are provided by residues 175-179 and 229-232; these read DTPGH and NKMD. The tract at residues 229-232 is G4; the sequence is NKMD. Residues 265 to 267 are G5; the sequence is SAL.

This sequence belongs to the TRAFAC class translation factor GTPase superfamily. Classic translation factor GTPase family. IF-2 subfamily.

Its subcellular location is the cytoplasm. Its function is as follows. One of the essential components for the initiation of protein synthesis. Protects formylmethionyl-tRNA from spontaneous hydrolysis and promotes its binding to the 30S ribosomal subunits. Also involved in the hydrolysis of GTP during the formation of the 70S ribosomal complex. The sequence is that of Translation initiation factor IF-2 (infB) from Mycoplasma pneumoniae (strain ATCC 29342 / M129 / Subtype 1) (Mycoplasmoides pneumoniae).